Reading from the N-terminus, the 106-residue chain is Replication restart protein PriB (106 aa).

The region spanning 4–103 (TNRLVLSGTV…LHAEQIEFID (100 aa)) is the SSB domain.

Belongs to the PriB family. Homodimer. Interacts with PriA and DnaT. Component of the replication restart primosome. Primosome assembly occurs via a 'hand-off' mechanism. PriA binds to replication forks, subsequently PriB then DnaT bind; DnaT then displaces ssDNA to generate the helicase loading substrate.

Involved in the restart of stalled replication forks, which reloads the replicative helicase on sites other than the origin of replication; the PriA-PriB pathway is the major replication restart pathway. During primosome assembly it facilitates complex formation between PriA and DnaT on DNA; stabilizes PriA on DNA. Stimulates the DNA unwinding activity of PriA helicase. This is Replication restart protein PriB from Yersinia pestis.